Here is a 494-residue protein sequence, read N- to C-terminus: Cobyrinate a,c-diamide synthase (494 aa).

The 206-residue stretch at 270-475 (KIGVALDEAF…AHLHGVAYRE (206 aa)) folds into the GATase cobBQ-type domain. The active-site Nucleophile is the Cys352.

It belongs to the CobB/CbiA family. It depends on Mg(2+) as a cofactor.

It carries out the reaction cob(II)yrinate + 2 L-glutamine + 2 ATP + 2 H2O = cob(II)yrinate a,c diamide + 2 L-glutamate + 2 ADP + 2 phosphate + 2 H(+). The enzyme catalyses Ni-sirohydrochlorin + 2 L-glutamine + 2 ATP + 2 H2O = Ni-sirohydrochlorin a,c-diamide + 2 L-glutamate + 2 ADP + 2 phosphate + 2 H(+). It participates in cofactor biosynthesis; adenosylcobalamin biosynthesis; cob(II)yrinate a,c-diamide from sirohydrochlorin (anaerobic route): step 10/10. In terms of biological role, catalyzes the ATP-dependent amidation of the two carboxylate groups at positions a and c of cobyrinate, using either L-glutamine or ammonia as the nitrogen source (Potential). Involved in the biosynthesis of the unique nickel-containing tetrapyrrole coenzyme F430, the prosthetic group of methyl-coenzyme M reductase (MCR), which plays a key role in methanogenesis and anaerobic methane oxidation. Catalyzes the ATP-dependent amidation of the two carboxylate groups at positions a and c of Ni-sirohydrochlorin, using L-glutamine or ammonia as the nitrogen source. Also able to use sirohydrochlorin as substrate, but only produces a monoamide species in a much slower reaction. Unable to use other metallosirohydrochlorins such as sirohaem and Co-sirohydrochlorin. This chain is Cobyrinate a,c-diamide synthase, found in Methanosarcina barkeri (strain Fusaro / DSM 804).